Reading from the N-terminus, the 116-residue chain is Large ribosomal subunit protein bL17 (116 aa).

Belongs to the bacterial ribosomal protein bL17 family. Part of the 50S ribosomal subunit. Contacts protein L32.

In Gloeobacter violaceus (strain ATCC 29082 / PCC 7421), this protein is Large ribosomal subunit protein bL17.